A 317-amino-acid chain; its full sequence is Acetyl-coenzyme A carboxylase carboxyl transferase subunit alpha (317 aa).

One can recognise a CoA carboxyltransferase C-terminal domain in the interval 37 to 292 (QISQKLEDTK…EEYILKAFNE (256 aa)).

Belongs to the AccA family. In terms of assembly, acetyl-CoA carboxylase is a heterohexamer composed of biotin carboxyl carrier protein (AccB), biotin carboxylase (AccC) and two subunits each of ACCase subunit alpha (AccA) and ACCase subunit beta (AccD).

It is found in the cytoplasm. The catalysed reaction is N(6)-carboxybiotinyl-L-lysyl-[protein] + acetyl-CoA = N(6)-biotinyl-L-lysyl-[protein] + malonyl-CoA. It participates in lipid metabolism; malonyl-CoA biosynthesis; malonyl-CoA from acetyl-CoA: step 1/1. In terms of biological role, component of the acetyl coenzyme A carboxylase (ACC) complex. First, biotin carboxylase catalyzes the carboxylation of biotin on its carrier protein (BCCP) and then the CO(2) group is transferred by the carboxyltransferase to acetyl-CoA to form malonyl-CoA. This is Acetyl-coenzyme A carboxylase carboxyl transferase subunit alpha from Flavobacterium psychrophilum (strain ATCC 49511 / DSM 21280 / CIP 103535 / JIP02/86).